A 186-amino-acid chain; its full sequence is Peptidyl-tRNA hydrolase (186 aa).

Y16 serves as a coordination point for tRNA. H21 serves as the catalytic Proton acceptor. Positions 60 and 62 each coordinate tRNA.

This sequence belongs to the PTH family. As to quaternary structure, monomer.

Its subcellular location is the cytoplasm. It carries out the reaction an N-acyl-L-alpha-aminoacyl-tRNA + H2O = an N-acyl-L-amino acid + a tRNA + H(+). Its function is as follows. Hydrolyzes ribosome-free peptidyl-tRNAs (with 1 or more amino acids incorporated), which drop off the ribosome during protein synthesis, or as a result of ribosome stalling. Catalyzes the release of premature peptidyl moieties from peptidyl-tRNA molecules trapped in stalled 50S ribosomal subunits, and thus maintains levels of free tRNAs and 50S ribosomes. This Tropheryma whipplei (strain TW08/27) (Whipple's bacillus) protein is Peptidyl-tRNA hydrolase.